Here is a 469-residue protein sequence, read N- to C-terminus: Uronate isomerase (469 aa).

Belongs to the metallo-dependent hydrolases superfamily. Uronate isomerase family.

The catalysed reaction is D-glucuronate = D-fructuronate. It catalyses the reaction aldehydo-D-galacturonate = keto-D-tagaturonate. It participates in carbohydrate metabolism; pentose and glucuronate interconversion. The chain is Uronate isomerase from Rhizobium meliloti (strain 1021) (Ensifer meliloti).